Consider the following 122-residue polypeptide: Acidic phospholipase A2 BlatPLA2 (122 aa).

Intrachain disulfides connect cysteine 26–cysteine 115, cysteine 28–cysteine 44, cysteine 43–cysteine 95, cysteine 49–cysteine 122, cysteine 50–cysteine 88, cysteine 57–cysteine 81, and cysteine 75–cysteine 86. Tyrosine 27, glycine 29, and glycine 31 together coordinate Ca(2+). The active site involves histidine 47. Position 48 (aspartate 48) interacts with Ca(2+). The active site involves aspartate 89.

It belongs to the phospholipase A2 family. Group II subfamily. D49 sub-subfamily. As to quaternary structure, monomer. Ca(2+) serves as cofactor. As to expression, expressed by the venom gland.

The protein localises to the secreted. The catalysed reaction is a 1,2-diacyl-sn-glycero-3-phosphocholine + H2O = a 1-acyl-sn-glycero-3-phosphocholine + a fatty acid + H(+). Its function is as follows. Acidic phospholipase A2 (PLA2) that only causes a mild edema, when subcutaneously injected in the mice foot. PLA2 catalyzes the calcium-dependent hydrolysis of the 2-acyl groups in 3-sn-phosphoglycerides. This chain is Acidic phospholipase A2 BlatPLA2, found in Bothriechis lateralis (Side-striped palm pitviper).